Here is a 223-residue protein sequence, read N- to C-terminus: Serine/threonine/tyrosine-interacting protein B (223 aa).

The Tyrosine-protein phosphatase domain maps to 28–176; the sequence is EMQEILPGLF…LQEYEAIYLA (149 aa).

It belongs to the protein-tyrosine phosphatase family. Non-receptor class subfamily.

Catalytically inactive phosphatase. In Xenopus laevis (African clawed frog), this protein is Serine/threonine/tyrosine-interacting protein B (styx-b).